We begin with the raw amino-acid sequence, 337 residues long: Pantothenate synthetase (337 aa).

Position 31-38 (31-38) interacts with ATP; that stretch reads MGALHEGH. Residue H38 is the Proton donor of the active site. Residue Q65 participates in (R)-pantoate binding. Q65 serves as a coordination point for beta-alanine. Position 152–155 (152–155) interacts with ATP; it reads GQKD. Q158 lines the (R)-pantoate pocket. ATP-binding positions include V181 and 189–192; that span reads LSSR.

It belongs to the pantothenate synthetase family. As to quaternary structure, homodimer.

It localises to the cytoplasm. The enzyme catalyses (R)-pantoate + beta-alanine + ATP = (R)-pantothenate + AMP + diphosphate + H(+). Its pathway is cofactor biosynthesis; (R)-pantothenate biosynthesis; (R)-pantothenate from (R)-pantoate and beta-alanine: step 1/1. In terms of biological role, catalyzes the condensation of pantoate with beta-alanine in an ATP-dependent reaction via a pantoyl-adenylate intermediate. In Streptomyces coelicolor (strain ATCC BAA-471 / A3(2) / M145), this protein is Pantothenate synthetase.